The primary structure comprises 700 residues: DNA topoisomerase 1 (700 aa).

Residues 3-114 (KNLIIVESPA…TLPRIVFHEI (112 aa)) enclose the Toprim domain. Glu9 and Asp83 together coordinate Mg(2+). In terms of domain architecture, Topo IA-type catalytic spans 130–553 (NMHSVNAQQT…EFYYPFMRKI (424 aa)). The tract at residues 164-169 (SAGRVQ) is interaction with DNA. Catalysis depends on Tyr298, which acts as the O-(5'-phospho-DNA)-tyrosine intermediate. 3 consecutive C4-type zinc fingers follow at residues 573-599 (CPDC…FPKC), 629-656 (CPSC…YPKC), and 669-692 (CEEC…CLKC).

It belongs to the type IA topoisomerase family. In terms of assembly, monomer. It depends on Mg(2+) as a cofactor.

It catalyses the reaction ATP-independent breakage of single-stranded DNA, followed by passage and rejoining.. In terms of biological role, releases the supercoiling and torsional tension of DNA, which is introduced during the DNA replication and transcription, by transiently cleaving and rejoining one strand of the DNA duplex. Introduces a single-strand break via transesterification at a target site in duplex DNA. The scissile phosphodiester is attacked by the catalytic tyrosine of the enzyme, resulting in the formation of a DNA-(5'-phosphotyrosyl)-enzyme intermediate and the expulsion of a 3'-OH DNA strand. The free DNA strand then undergoes passage around the unbroken strand, thus removing DNA supercoils. Finally, in the religation step, the DNA 3'-OH attacks the covalent intermediate to expel the active-site tyrosine and restore the DNA phosphodiester backbone. This is DNA topoisomerase 1 from Campylobacter jejuni subsp. jejuni serotype O:2 (strain ATCC 700819 / NCTC 11168).